Here is a 384-residue protein sequence, read N- to C-terminus: Carbamoyl phosphate synthase small chain (384 aa).

The tract at residues 1–192 (MPIAAAKPAL…FGPVAEQQGQ (192 aa)) is CPSase. Positions 51, 244, and 246 each coordinate L-glutamine. One can recognise a Glutamine amidotransferase type-1 domain in the interval 196 to 381 (TVVALDFGVK…VKLMRQQKAE (186 aa)). Cysteine 272 (nucleophile) is an active-site residue. L-glutamine-binding residues include methionine 273, glutamine 276, asparagine 312, glycine 314, and phenylalanine 315. Residues histidine 354 and glutamate 356 contribute to the active site.

The protein belongs to the CarA family. In terms of assembly, composed of two chains; the small (or glutamine) chain promotes the hydrolysis of glutamine to ammonia, which is used by the large (or ammonia) chain to synthesize carbamoyl phosphate. Tetramer of heterodimers (alpha,beta)4.

The enzyme catalyses hydrogencarbonate + L-glutamine + 2 ATP + H2O = carbamoyl phosphate + L-glutamate + 2 ADP + phosphate + 2 H(+). It catalyses the reaction L-glutamine + H2O = L-glutamate + NH4(+). Its pathway is amino-acid biosynthesis; L-arginine biosynthesis; carbamoyl phosphate from bicarbonate: step 1/1. It participates in pyrimidine metabolism; UMP biosynthesis via de novo pathway; (S)-dihydroorotate from bicarbonate: step 1/3. Small subunit of the glutamine-dependent carbamoyl phosphate synthetase (CPSase). CPSase catalyzes the formation of carbamoyl phosphate from the ammonia moiety of glutamine, carbonate, and phosphate donated by ATP, constituting the first step of 2 biosynthetic pathways, one leading to arginine and/or urea and the other to pyrimidine nucleotides. The small subunit (glutamine amidotransferase) binds and cleaves glutamine to supply the large subunit with the substrate ammonia. In Synechocystis sp. (strain ATCC 27184 / PCC 6803 / Kazusa), this protein is Carbamoyl phosphate synthase small chain.